Reading from the N-terminus, the 249-residue chain is Triosephosphate isomerase (249 aa).

9–11 (NWK) is a binding site for substrate. His94 serves as the catalytic Electrophile. Residue Glu166 is the Proton acceptor of the active site. Substrate is bound by residues Gly172, Ser211, and 232–233 (GG).

It belongs to the triosephosphate isomerase family. As to quaternary structure, homodimer.

The protein resides in the cytoplasm. The enzyme catalyses D-glyceraldehyde 3-phosphate = dihydroxyacetone phosphate. It functions in the pathway carbohydrate biosynthesis; gluconeogenesis. Its pathway is carbohydrate degradation; glycolysis; D-glyceraldehyde 3-phosphate from glycerone phosphate: step 1/1. In terms of biological role, involved in the gluconeogenesis. Catalyzes stereospecifically the conversion of dihydroxyacetone phosphate (DHAP) to D-glyceraldehyde-3-phosphate (G3P). In Moorella thermoacetica (strain ATCC 39073 / JCM 9320), this protein is Triosephosphate isomerase.